The following is a 461-amino-acid chain: Ribonuclease inhibitor (461 aa).

Ser2 bears the N-acetylserine mark. Residues Ser2–Gln11 are 2 X 5 AA tandem repeats of S-L-D-I-Q. 15 LRR repeats span residues Trp20–Ile48, Ser49–Val76, Leu77–Leu105, Ser106–Leu133, Cys134–Leu162, Ala163–Leu190, Cys191–Leu219, Cys220–Leu247, Cys248–Leu276, Cys277–Leu304, Cys305–Phe333, Ser334–Leu361, Cys362–Leu390, Ala391–Leu418, and Val419–Leu447. At Ser91 the chain carries Phosphoserine.

Forms high-affinity heterodimers with RNASE1, ANG and RNASE2.

It is found in the cytoplasm. Its subcellular location is the nucleus. Ribonuclease inhibitor which inhibits RNASE1, RNASE2 and angiogenin (ANG). May play a role in redox homeostasis. Required to inhibit the cytotoxic tRNA ribonuclease activity of ANG in the cytoplasm in absence of stress. Relocates to the nucleus in response to stress, relieving inhibition of ANG in the cytoplasm, and inhibiting the angiogenic activity of ANG in the nucleus. The sequence is that of Ribonuclease inhibitor (RNH1) from Pan troglodytes (Chimpanzee).